The following is a 155-amino-acid chain: uncharacterized protein (155 aa).

2 disordered regions span residues 24 to 63 (RVGY…VVLK) and 80 to 155 (KAAK…DENE). Positions 43–56 (PDEDGNESDKEDEQ) are enriched in acidic residues. Ser50 carries the post-translational modification Phosphoserine. Residue Lys108 is modified to N6-acetyllysine. The segment covering 128-147 (KQSPVRKNSQKQIKNSSLLS) has biased composition (polar residues). A phosphoserine mark is found at Ser130, Ser147, and Ser150.

This is an uncharacterized protein from Rattus norvegicus (Rat).